The sequence spans 204 residues: Large ribosomal subunit protein uL4 (204 aa).

The interval 48-75 is disordered; the sequence is HTKGRSDVSGGGKKPWRQKGRGGARAGS.

The protein belongs to the universal ribosomal protein uL4 family. In terms of assembly, part of the 50S ribosomal subunit.

In terms of biological role, one of the primary rRNA binding proteins, this protein initially binds near the 5'-end of the 23S rRNA. It is important during the early stages of 50S assembly. It makes multiple contacts with different domains of the 23S rRNA in the assembled 50S subunit and ribosome. Functionally, forms part of the polypeptide exit tunnel. In Campylobacter fetus subsp. fetus (strain 82-40), this protein is Large ribosomal subunit protein uL4.